Reading from the N-terminus, the 541-residue chain is uncharacterized protein (541 aa).

Helical transmembrane passes span 57–77, 90–110, 144–164, 167–187, 221–241, and 257–277; these read LVVTANLLGIGVALLLVTIAI, LTFGVVPGYVLLALALGSYAL, VGHLMFWGVGTALLTTLYGLI, AFIPRFLFAVSFCGVLVATAT, MVVWLLGSGVPVVGIALMAMF, and VLIISMVTLVFGFILMWILAW. Residues 278–329 form the HAMP domain; that stretch reads LTATPVRVVRAALRRVERGELRTNLVVFDGTELGELQRGFNAMVAGLRERER. The Guanylate cyclase domain occupies 361-485; sequence AVVFIDIVGS…EPVNEAARLC (125 aa).

This sequence belongs to the adenylyl cyclase class-3 family.

The protein localises to the cell membrane. This is an uncharacterized protein from Mycobacterium tuberculosis (strain CDC 1551 / Oshkosh).